The sequence spans 364 residues: Capsular polysaccharide phosphotransferase fcs1 (364 aa).

It belongs to the stealth family.

Functionally, part of a group II capsule biosynthesis locus. In Haemophilus influenzae, this protein is Capsular polysaccharide phosphotransferase fcs1 (fcs1).